A 245-amino-acid chain; its full sequence is 1-(5-phosphoribosyl)-5-[(5-phosphoribosylamino)methylideneamino] imidazole-4-carboxamide isomerase (245 aa).

The active-site Proton acceptor is Asp7. The active-site Proton donor is Asp129.

Belongs to the HisA/HisF family.

It localises to the cytoplasm. It catalyses the reaction 1-(5-phospho-beta-D-ribosyl)-5-[(5-phospho-beta-D-ribosylamino)methylideneamino]imidazole-4-carboxamide = 5-[(5-phospho-1-deoxy-D-ribulos-1-ylimino)methylamino]-1-(5-phospho-beta-D-ribosyl)imidazole-4-carboxamide. The protein operates within amino-acid biosynthesis; L-histidine biosynthesis; L-histidine from 5-phospho-alpha-D-ribose 1-diphosphate: step 4/9. In Shewanella halifaxensis (strain HAW-EB4), this protein is 1-(5-phosphoribosyl)-5-[(5-phosphoribosylamino)methylideneamino] imidazole-4-carboxamide isomerase.